The chain runs to 269 residues: MMSPMASILMYTHFRMWKHALNVWSITLFQNFRLTAELIILFTLLNFLFLIPVMNVFAFFIHNVVNFSLIIYFSKLYLKVKGNEEEYKREIERTKLAQALKTYLPHAVTLTFATYAMTVAYLILLFVSLLILGLITGITVFTFGTDFIIAYLIFIVLLLILYFWIITSYPVFFARTVIEGQTPRDFFFLFLTAPFSKLLWKLAFSLEVLFSSFVIGFFSLFIFLFQFVMSHLFPPLFFLTYFVAFSNTLLIYLFGVISVSYLLWKREGK.

The next 6 helical transmembrane spans lie at 21–43 (LNVW…ILFT), 48–70 (LFLI…FSLI), 121–143 (YLIL…VFTF), 147–166 (FIIA…FWII), 205–227 (SLEV…LFQF), and 242–264 (FVAF…YLLW).

It is found in the cell membrane. This is an uncharacterized protein from Aquifex aeolicus (strain VF5).